Reading from the N-terminus, the 297-residue chain is Transcription factor bHLH129 (297 aa).

A disordered region spans residues 1-145 (MYPPNSSKST…SSSHQEHNSL (145 aa)). Phosphoserine is present on Ser-35. Over residues 68–82 (SSIGFDSNASSSSSL) the composition is skewed to low complexity. Positions 111 to 121 (PNGGYGGGGEQ) are enriched in gly residues. At Ser-138 the chain carries Phosphoserine. The 51-residue stretch at 239 to 289 (FATHPRSIAERERRTRISGKLKKLQELVPNMDKQTSYADMLDLAVEHIKGL) folds into the bHLH domain.

In terms of assembly, homodimer.

The protein resides in the nucleus. This chain is Transcription factor bHLH129 (BHLH129), found in Arabidopsis thaliana (Mouse-ear cress).